Consider the following 254-residue polypeptide: MAIANKNIIFVAGLGGIGLDTSREIVKSGPKNLVILDRIDNPTAIAELKAINPKVTVTFYPYDVTVPVAETIKLLKTIFAQLKTVDLLINGAGILDDHQIERTIAVNFTGTVNTTTAIMEFWDKRKGGPGGVVANICSVTGFNAIYQVPVYSASKAAALSFTNSLARLAPITGVTAYSINPGITRTPLVHKFNSWLDVEPRVGELLLEHPTQTTLECAQNFVKAIEANKNGAIWQLDLGQLIAVEWTKHWDSHI.

10–33 (FVAGLGGIGLDTSREIVKSGPKNL) contacts NAD(+). Position 138 (S138) interacts with substrate. Residue Y151 is the Proton acceptor of the active site.

It belongs to the short-chain dehydrogenases/reductases (SDR) family. Homodimer.

The catalysed reaction is a primary alcohol + NAD(+) = an aldehyde + NADH + H(+). It carries out the reaction a secondary alcohol + NAD(+) = a ketone + NADH + H(+). The protein is Alcohol dehydrogenase 1 (Adh1) of Drosophila montana (Fruit fly).